Consider the following 1212-residue polypeptide: MSDYILSAEINLPLLKWMTSFKLNSNLFSTSRNQSLKSISEIYRDLQYNIIPPKDEELQNLWTHLYDLNNYYSNSIEYNQVEKSLMGLKSKYRNSYLKGYYEIINLFQSIANDFEKLSSPISQTTTTTQIPIISFNKNSVLDAINNRKNENKENSFKFLSSFESYVPTVEEIKRIYCIDNKEILIDKSCTLPVEYKLFHSFSLLNLYVYLIIVIRIIKLIGEINRQSSNASENQEILHLLKEYSLHIKSIEEFQLQLKLNNLYYQPTKKEIILKYFVEINSNNNLNNLNNNNDNNLNNNNSNNNLNNNNNSNSNFNNDNNLNSNINSNDTSISNNNSIINNNSNNSNTNNNNNNNIINNIKIFEFSEKELKYSKRYYSYNEFTLRPAELPNNSLGIETQNLIFYTTSNYNSGNSNSGSNNSNSSNNNSSSNSLINNSGGNSNSGLIPKIKFNHHRPKDINPKIVLAVYNNILSMSKVIDKKTINSMNEIIKNNNNNNNNNSNNNNNNNDEDDSDYEENEFNKEFNNQFEFGSEIIEQDKECYICRFRSEFISFCNYCKCKMICDLCSVNKVCWNCYFKVDKVSGNEQQQQQQHFIPLEVVVKLKDRKYPRLIYMLLRSYSFRDLMNTLYQDRFERDSVISPKDRFTYKLHKTKLYNFHLVLPNCKNPFQTKEIQIFDDYSLIIALRLLMNFILSNYIIDQKEVPPPPTQPSSRPQSPPTVSPLTPLNNHHHSGGSLLEHAIARNFNNNSVEVVSDDNTSGSGTGGSNSNSNTGGSYNKFNNNNNNRKNSTGSGTNSRNNNSDNEYSYNNNNNNYNNNNNNKIINNNSIVTVENPILWNIDKFILNVIESSIDIEQSLKIPSSCIETEIEPFASGGQANIYMVKHIDWPMLSNCPEGSYVFKQFIETKDSLQLEEDIEREMYEEKIYQTYKTGESVDNFKYNFSNVEQTDKKSLETLFYEEVDKLKRLQFSDYIIKMPAISDDNPNKRGMLLECATAGSLKTNLLEYRSWKLVIRFMMDICLGMIDIHKCQIIHRDLKPDNILVFENFNSSEASDENDERQREFGGLICKITDLGASIQKELVHDNNFTSTFHTDDYVPEEYGRFQYDGEKVDIYSFGCTFFEMVTKHRYQYKHPTPLHRDFLTTDFQYIPIRIKTLIASLLAEQSQRKQSFNEVYNDLQDIYKNVIPGLPDIPLSPISTNGSQFCKRCNPQK.

A helical transmembrane segment spans residues 197–217; sequence LFHSFSLLNLYVYLIIVIRII. N-linked (GlcNAc...) asparagine glycans are attached at residues Asn229, Asn299, Asn309, Asn328, Asn335, Asn341, Asn344, Asn391, Asn419, Asn422, Asn426, Asn427, Asn435, and Asn499. Positions 288–329 are disordered; the sequence is LNNNNDNNLNNNNSNNNLNNNNNSNSNFNNDNNLNSNINSND. Disordered regions lie at residues 412 to 439 and 489 to 517; these read GNSN…NSGG and IIKN…DYEE. A compositionally biased stretch (low complexity) spans 489–507; that stretch reads IIKNNNNNNNNNSNNNNNN. Over residues 508–517 the composition is skewed to acidic residues; sequence NDEDDSDYEE. A helical transmembrane segment spans residues 673–693; that stretch reads IQIFDDYSLIIALRLLMNFIL. A compositionally biased stretch (pro residues) spans 703–720; the sequence is VPPPPTQPSSRPQSPPTV. Disordered regions lie at residues 703 to 733 and 751 to 813; these read VPPP…HHSG and EVVS…NNNN. The Protein kinase domain maps to 865–1182; the sequence is ETEIEPFASG…EVYNDLQDIY (318 aa). ATP is bound by residues 871–879 and Lys924; that span reads FASGGQANI. Residue Asp1035 is the Proton acceptor of the active site.

It belongs to the protein kinase superfamily. Ser/Thr protein kinase family.

It localises to the membrane. It carries out the reaction L-seryl-[protein] + ATP = O-phospho-L-seryl-[protein] + ADP + H(+). The catalysed reaction is L-threonyl-[protein] + ATP = O-phospho-L-threonyl-[protein] + ADP + H(+). This Dictyostelium discoideum (Social amoeba) protein is Probable serine/threonine-protein kinase DDB_G0284491.